We begin with the raw amino-acid sequence, 404 residues long: Cysteine desulfurase IscS (404 aa).

Pyridoxal 5'-phosphate is bound by residues 75–76 (AT), N155, Q183, and 203–205 (SAH). Position 206 is an N6-(pyridoxal phosphate)lysine (K206). T243 provides a ligand contact to pyridoxal 5'-phosphate. Residue C328 is the Cysteine persulfide intermediate of the active site. C328 lines the [2Fe-2S] cluster pocket.

The protein belongs to the class-V pyridoxal-phosphate-dependent aminotransferase family. NifS/IscS subfamily. Homodimer. Forms a heterotetramer with IscU, interacts with other sulfur acceptors. Requires pyridoxal 5'-phosphate as cofactor.

Its subcellular location is the cytoplasm. The enzyme catalyses (sulfur carrier)-H + L-cysteine = (sulfur carrier)-SH + L-alanine. Its pathway is cofactor biosynthesis; iron-sulfur cluster biosynthesis. Functionally, master enzyme that delivers sulfur to a number of partners involved in Fe-S cluster assembly, tRNA modification or cofactor biosynthesis. Catalyzes the removal of elemental sulfur atoms from cysteine to produce alanine. Functions as a sulfur delivery protein for Fe-S cluster synthesis onto IscU, an Fe-S scaffold assembly protein, as well as other S acceptor proteins. The sequence is that of Cysteine desulfurase IscS from Buchnera aphidicola subsp. Baizongia pistaciae (strain Bp).